Reading from the N-terminus, the 270-residue chain is Putative pyruvate, phosphate dikinase regulatory protein 2 (270 aa).

151-158 (GVSRTSKT) is an ADP binding site.

Belongs to the pyruvate, phosphate/water dikinase regulatory protein family. PDRP subfamily.

It catalyses the reaction N(tele)-phospho-L-histidyl/L-threonyl-[pyruvate, phosphate dikinase] + ADP = N(tele)-phospho-L-histidyl/O-phospho-L-threonyl-[pyruvate, phosphate dikinase] + AMP + H(+). The enzyme catalyses N(tele)-phospho-L-histidyl/O-phospho-L-threonyl-[pyruvate, phosphate dikinase] + phosphate + H(+) = N(tele)-phospho-L-histidyl/L-threonyl-[pyruvate, phosphate dikinase] + diphosphate. Bifunctional serine/threonine kinase and phosphorylase involved in the regulation of the pyruvate, phosphate dikinase (PPDK) by catalyzing its phosphorylation/dephosphorylation. This Listeria welshimeri serovar 6b (strain ATCC 35897 / DSM 20650 / CCUG 15529 / CIP 8149 / NCTC 11857 / SLCC 5334 / V8) protein is Putative pyruvate, phosphate dikinase regulatory protein 2.